Consider the following 173-residue polypeptide: Photosystem I assembly protein Ycf3 (173 aa).

TPR repeat units lie at residues 35–68, 72–105, and 120–153; these read AFVY…EEDT, GYIL…NPRL, and GEKA…APNN.

It belongs to the Ycf3 family.

Its subcellular location is the cellular thylakoid membrane. Functionally, essential for the assembly of the photosystem I (PSI) complex. May act as a chaperone-like factor to guide the assembly of the PSI subunits. This is Photosystem I assembly protein Ycf3 from Nostoc sp. (strain PCC 7120 / SAG 25.82 / UTEX 2576).